Here is a 418-residue protein sequence, read N- to C-terminus: Probable carboxypeptidase AFLA_000940 (418 aa).

Positions 1 to 18 are cleaved as a signal peptide; it reads MKATDLFHVTVLVAGALA. Asparagine 74 carries an N-linked (GlcNAc...) asparagine glycan. Aspartate 147 contacts Zn(2+). N-linked (GlcNAc...) asparagine glycosylation occurs at asparagine 168. Glutamate 179 serves as the catalytic Proton acceptor. Zn(2+) is bound at residue glutamate 180.

The protein belongs to the peptidase M20A family. It depends on Zn(2+) as a cofactor.

The protein resides in the secreted. This is Probable carboxypeptidase AFLA_000940 from Aspergillus flavus (strain ATCC 200026 / FGSC A1120 / IAM 13836 / NRRL 3357 / JCM 12722 / SRRC 167).